The primary structure comprises 268 residues: Undecaprenyl-diphosphatase (268 aa).

7 consecutive transmembrane segments (helical) span residues 47-67 (FAILIQLGAILAIVALYFFKL), 83-103 (FIIGVLIAFLPAVIIGLIAGK), 109-129 (LFDPWVVCFSLIVGGAILLWV), 144-164 (YPLMMYLWIGVAQCLAMIPGV), 184-204 (AAEFSFFLAIPTMVGAFVYDF), 218-238 (LIAIGFVVSFITAMIVVKAFL), and 246-266 (FVLFAWWRVIVGTLGLIALAL).

The protein belongs to the UppP family.

The protein resides in the cell inner membrane. The catalysed reaction is di-trans,octa-cis-undecaprenyl diphosphate + H2O = di-trans,octa-cis-undecaprenyl phosphate + phosphate + H(+). Functionally, catalyzes the dephosphorylation of undecaprenyl diphosphate (UPP). Confers resistance to bacitracin. The protein is Undecaprenyl-diphosphatase of Bradyrhizobium sp. (strain ORS 278).